A 403-amino-acid polypeptide reads, in one-letter code: Tryptophan synthase beta chain (403 aa).

Lys-90 is modified (N6-(pyridoxal phosphate)lysine).

Belongs to the TrpB family. In terms of assembly, tetramer of two alpha and two beta chains. The cofactor is pyridoxal 5'-phosphate.

The catalysed reaction is (1S,2R)-1-C-(indol-3-yl)glycerol 3-phosphate + L-serine = D-glyceraldehyde 3-phosphate + L-tryptophan + H2O. It functions in the pathway amino-acid biosynthesis; L-tryptophan biosynthesis; L-tryptophan from chorismate: step 5/5. In terms of biological role, the beta subunit is responsible for the synthesis of L-tryptophan from indole and L-serine. The sequence is that of Tryptophan synthase beta chain from Leifsonia xyli subsp. xyli (strain CTCB07).